The primary structure comprises 132 residues: uncharacterized protein (132 aa).

The first 24 residues, 1 to 24 (MVTIGSSSLVLFLFFVVFVQITYT), serve as a signal peptide directing secretion. The next 2 helical transmembrane spans lie at 75–95 (YVNV…ILGI) and 112–132 (ESAI…VYIH).

Its subcellular location is the membrane. This is an uncharacterized protein from Saccharomyces cerevisiae (strain ATCC 204508 / S288c) (Baker's yeast).